A 91-amino-acid chain; its full sequence is Small ribosomal subunit protein bS20 (91 aa).

The protein belongs to the bacterial ribosomal protein bS20 family.

Functionally, binds directly to 16S ribosomal RNA. The protein is Small ribosomal subunit protein bS20 of Thermosipho melanesiensis (strain DSM 12029 / CIP 104789 / BI429).